A 275-amino-acid chain; its full sequence is Bis(5'-nucleosyl)-tetraphosphatase, symmetrical (275 aa).

The protein belongs to the Ap4A hydrolase family.

The catalysed reaction is P(1),P(4)-bis(5'-adenosyl) tetraphosphate + H2O = 2 ADP + 2 H(+). In terms of biological role, hydrolyzes diadenosine 5',5'''-P1,P4-tetraphosphate to yield ADP. This Haemophilus influenzae (strain PittEE) protein is Bis(5'-nucleosyl)-tetraphosphatase, symmetrical.